A 354-amino-acid polypeptide reads, in one-letter code: Heme A synthase (354 aa).

A run of 8 helical transmembrane segments spans residues 21 to 41, 106 to 126, 139 to 159, 171 to 191, 212 to 232, 268 to 288, 304 to 324, and 326 to 346; these read VAVWLLACCFMVAVMVLLGGL, VWGRLIGVVFGLPFLWLALSG, VFLLGAAQGGMGWFMVKSGLV, AHLALAFLIHGWMFWLALDIL, MLGLTGLVIVTLLFGGLVAGL, VQFGHRTLAEITIVVALVGWF, AVGLMALLQVGLGIGTLVMVV, and VWLASAHQMGAMALLTLCLWA. Histidine 272 is a binding site for heme. Histidine 332 serves as a coordination point for heme.

Belongs to the COX15/CtaA family. Type 2 subfamily. In terms of assembly, interacts with CtaB. Heme b is required as a cofactor.

The protein localises to the cell membrane. The catalysed reaction is Fe(II)-heme o + 2 A + H2O = Fe(II)-heme a + 2 AH2. It participates in porphyrin-containing compound metabolism; heme A biosynthesis; heme A from heme O: step 1/1. Functionally, catalyzes the conversion of heme O to heme A by two successive hydroxylations of the methyl group at C8. The first hydroxylation forms heme I, the second hydroxylation results in an unstable dihydroxymethyl group, which spontaneously dehydrates, resulting in the formyl group of heme A. In Paramagnetospirillum magneticum (strain ATCC 700264 / AMB-1) (Magnetospirillum magneticum), this protein is Heme A synthase.